We begin with the raw amino-acid sequence, 568 residues long: O-fucosyltransferase 9 (568 aa).

Residues 1–19 (MHGLSRLGNGSSNGRINIP) are compositionally biased toward low complexity. The segment at 1-33 (MHGLSRLGNGSSNGRINIPSPSPPSSPRIRHTR) is disordered. A helical; Signal-anchor for type II membrane protein membrane pass occupies residues 65–85 (LLLAPLLYIAGMLLFMGSFGF). N125, N151, N189, and N243 each carry an N-linked (GlcNAc...) asparagine glycan. 336 to 338 (HLR) contributes to the substrate binding site. N408 and N409 each carry an N-linked (GlcNAc...) asparagine glycan.

Belongs to the glycosyltransferase GT106 family.

Its subcellular location is the membrane. It functions in the pathway glycan metabolism. This Arabidopsis thaliana (Mouse-ear cress) protein is O-fucosyltransferase 9.